We begin with the raw amino-acid sequence, 404 residues long: Cysteine desulfurase IscS (404 aa).

Pyridoxal 5'-phosphate is bound by residues 75-76 (AT), Asn155, Gln183, and 203-205 (SAH). Lys206 carries the N6-(pyridoxal phosphate)lysine modification. Thr243 lines the pyridoxal 5'-phosphate pocket. Cys328 acts as the Cysteine persulfide intermediate in catalysis. Cys328 contributes to the [2Fe-2S] cluster binding site.

It belongs to the class-V pyridoxal-phosphate-dependent aminotransferase family. NifS/IscS subfamily. Homodimer. Forms a heterotetramer with IscU, interacts with other sulfur acceptors. It depends on pyridoxal 5'-phosphate as a cofactor.

Its subcellular location is the cytoplasm. The enzyme catalyses (sulfur carrier)-H + L-cysteine = (sulfur carrier)-SH + L-alanine. Its pathway is cofactor biosynthesis; iron-sulfur cluster biosynthesis. In terms of biological role, master enzyme that delivers sulfur to a number of partners involved in Fe-S cluster assembly, tRNA modification or cofactor biosynthesis. Catalyzes the removal of elemental sulfur atoms from cysteine to produce alanine. Functions as a sulfur delivery protein for Fe-S cluster synthesis onto IscU, an Fe-S scaffold assembly protein, as well as other S acceptor proteins. In Pseudomonas putida (strain W619), this protein is Cysteine desulfurase IscS.